The following is a 358-amino-acid chain: Fructose-bisphosphate aldolase 2, cytoplasmic (358 aa).

Position 39 (R39) interacts with substrate. Catalysis depends on E183, which acts as the Proton acceptor. K225 serves as the catalytic Schiff-base intermediate with dihydroxyacetone-P. Substrate is bound by residues 266-268 and R298; that span reads SGG.

It belongs to the class I fructose-bisphosphate aldolase family. As to quaternary structure, homotetramer.

The protein localises to the cytoplasm. Its subcellular location is the cytosol. It carries out the reaction beta-D-fructose 1,6-bisphosphate = D-glyceraldehyde 3-phosphate + dihydroxyacetone phosphate. It participates in carbohydrate degradation; glycolysis; D-glyceraldehyde 3-phosphate and glycerone phosphate from D-glucose: step 4/4. Fructose-bisphosphate aldolase that plays a key role in glycolysis and gluconeogenesis. This chain is Fructose-bisphosphate aldolase 2, cytoplasmic, found in Oryza sativa subsp. japonica (Rice).